A 508-amino-acid polypeptide reads, in one-letter code: Glycerol kinase (508 aa).

Threonine 14 is an ADP binding site. Threonine 14, threonine 15, and serine 16 together coordinate ATP. Sn-glycerol 3-phosphate is bound at residue threonine 14. Residue arginine 18 participates in ADP binding. The sn-glycerol 3-phosphate site is built by arginine 84, glutamate 85, tyrosine 136, and aspartate 245. Positions 84, 85, 136, 245, and 246 each coordinate glycerol. Residues threonine 267 and glycine 314 each coordinate ADP. ATP contacts are provided by threonine 267, glycine 314, glutamine 318, and glycine 415. Positions 415 and 419 each coordinate ADP.

The protein belongs to the FGGY kinase family.

It carries out the reaction glycerol + ATP = sn-glycerol 3-phosphate + ADP + H(+). The protein operates within polyol metabolism; glycerol degradation via glycerol kinase pathway; sn-glycerol 3-phosphate from glycerol: step 1/1. With respect to regulation, inhibited by fructose 1,6-bisphosphate (FBP). Key enzyme in the regulation of glycerol uptake and metabolism. Catalyzes the phosphorylation of glycerol to yield sn-glycerol 3-phosphate. This is Glycerol kinase from Bordetella parapertussis (strain 12822 / ATCC BAA-587 / NCTC 13253).